Consider the following 548-residue polypeptide: MFS-type transporter TOXA (548 aa).

Residues 1-12 (MDEQIVSASSNV) are compositionally biased toward polar residues. The segment at 1–33 (MDEQIVSASSNVKDGVEKQPVKDREDVDANVVP) is disordered. The segment covering 14-27 (DGVEKQPVKDREDV) has biased composition (basic and acidic residues). 14 helical membrane passes run 43 to 63 (ISLI…FLGA), 85 to 105 (AVAW…PLFG), 114 to 134 (KWLF…CALA), 146 to 166 (VAGI…ALIV), 177 to 197 (MIGA…GAIA), 204 to 224 (WCFW…LFFF), 250 to 270 (IGAG…QWGG), 280 to 300 (VVAL…HQYW), 316 to 336 (GFLL…AALY), 357 to 377 (MLPI…TISF), 382 to 402 (APFI…LYTF), 411 to 431 (IIGY…QAFI), 444 to 464 (YASA…LCVC), and 518 to 538 (FLVA…LSWA).

Belongs to the major facilitator superfamily. TCR/Tet family.

Its subcellular location is the membrane. In terms of biological role, MFS-type transporter; part of the diffuse TOX2 gene cluster that mediates the biosynthesis of the HC-toxin, cyclic tetrapeptide of structure cyclo(D-Pro-L-Ala-D-Ala-L-Aeo), where Aeo stands for 2-amino-9,10-epoxi-8-oxodecanoic acid. HC-toxin is a determinant of specificity and virulence in the interaction between the producing fungus and its host, maize. TOXA acts as a HC-toxin efflux pump which contributes to self-protection against HC-toxin and/or the secretion of HC-toxin into the extracellular milieu. The chain is MFS-type transporter TOXA from Cochliobolus carbonum (Maize leaf spot fungus).